We begin with the raw amino-acid sequence, 312 residues long: Olfactory receptor-like protein COR5 (312 aa).

The Extracellular segment spans residues 1–26 (MALGNCTTPTTFILSGLTDNPRLQMP). Asn-5 carries N-linked (GlcNAc...) asparagine glycosylation. The chain crosses the membrane as a helical span at residues 27–49 (LFMVFLAIYTITLLANLGLIALI). The Cytoplasmic segment spans residues 50–57 (SVDFHLQT). A helical membrane pass occupies residues 58–79 (PMYIFLQNLSFTDAAYSTVITP). Residues 80–100 (KMLATFLEERRTISYVGCILQ) lie on the Extracellular side of the membrane. Residues Cys-97 and Cys-179 are joined by a disulfide bond. A helical membrane pass occupies residues 101–120 (YFSFVLLTSSECLLLAVMAY). Residues 121–139 (DRYVAICKPLLYPAIMTKA) lie on the Cytoplasmic side of the membrane. The chain crosses the membrane as a helical span at residues 140-164 (VCWRLVEGLYSLAFLNSLVHTSGLL). Residues 165–205 (KLSFCSSNVVNHFFCDNSPLFQISSSSTTLNELLVFIFGSW) lie on the Extracellular side of the membrane. A helical transmembrane segment spans residues 206–226 (FAMSSIITTPISYVFIILTVV). The Cytoplasmic segment spans residues 227–239 (RIRSKDGKYKAFS). Residues 240-260 (TCTSHLMAVSLFHGTVIFMYL) form a helical membrane-spanning segment. The Extracellular segment spans residues 261–271 (RPVKLFSLDTD). A helical membrane pass occupies residues 272–292 (KIASLFYTVVIPMLNPLIYSW). The Cytoplasmic portion of the chain corresponds to 293–312 (RNKEVKDALRRVIATNVWIH).

It belongs to the G-protein coupled receptor 1 family.

It is found in the cell membrane. In terms of biological role, odorant receptor. The chain is Olfactory receptor-like protein COR5 (COR5) from Gallus gallus (Chicken).